The following is an 873-amino-acid chain: Outer membrane usher protein FimC (873 aa).

The N-terminal stretch at 1–15 (MKQIPLILAMSLAFA) is a signal peptide. Cysteines 815 and 838 form a disulfide.

The protein belongs to the fimbrial export usher family.

It localises to the cell outer membrane. In terms of biological role, probable porin-like protein necessary for the assembly of a pilin-type protein. In Bordetella pertussis (strain Tohama I / ATCC BAA-589 / NCTC 13251), this protein is Outer membrane usher protein FimC (fimC).